The chain runs to 406 residues: Tryptophan synthase beta chain (406 aa).

Lys99 is subject to N6-(pyridoxal phosphate)lysine.

The protein belongs to the TrpB family. As to quaternary structure, tetramer of two alpha and two beta chains. It depends on pyridoxal 5'-phosphate as a cofactor.

It catalyses the reaction (1S,2R)-1-C-(indol-3-yl)glycerol 3-phosphate + L-serine = D-glyceraldehyde 3-phosphate + L-tryptophan + H2O. The protein operates within amino-acid biosynthesis; L-tryptophan biosynthesis; L-tryptophan from chorismate: step 5/5. In terms of biological role, the beta subunit is responsible for the synthesis of L-tryptophan from indole and L-serine. The sequence is that of Tryptophan synthase beta chain (trpB) from Caulobacter vibrioides (strain ATCC 19089 / CIP 103742 / CB 15) (Caulobacter crescentus).